Consider the following 597-residue polypeptide: Peptidyl-prolyl cis-trans isomerase-like 2 (597 aa).

The region spanning 41 to 114 (KKLPFNFCAA…TTDSDENKGD (74 aa)) is the U-box domain. Residues 328 to 483 (NKGYVRMETN…NKIVIKDMII (156 aa)) form the PPIase cyclophilin-type domain. The span at 495–519 (KKQKEGEEERKREVARQGGTEDDRT) shows a compositional bias: basic and acidic residues. Disordered stretches follow at residues 495-521 (KKQK…RTTW) and 560-597 (ATTT…FDGW).

This sequence belongs to the cyclophilin-type PPIase family. PPIL2 subfamily.

It is found in the nucleus. It catalyses the reaction [protein]-peptidylproline (omega=180) = [protein]-peptidylproline (omega=0). The enzyme catalyses S-ubiquitinyl-[E2 ubiquitin-conjugating enzyme]-L-cysteine + [acceptor protein]-L-lysine = [E2 ubiquitin-conjugating enzyme]-L-cysteine + N(6)-ubiquitinyl-[acceptor protein]-L-lysine.. Its pathway is protein modification; protein ubiquitination. May catalyze the cis-trans isomerization of proline imidic peptide bonds in oligopeptides thereby assisting the folding of proteins. May also function as a chaperone, playing a role in intracellular transport of proteins. May also have a protein ubiquitin ligase activity acting as an E3 ubiquitin protein ligase or as a ubiquitin-ubiquitin ligase promoting elongation of ubiquitin chains on proteins. This is Peptidyl-prolyl cis-trans isomerase-like 2 (ppi-2) from Neurospora crassa (strain ATCC 24698 / 74-OR23-1A / CBS 708.71 / DSM 1257 / FGSC 987).